A 304-amino-acid polypeptide reads, in one-letter code: Putative S-adenosyl-L-methionine-dependent methyltransferase MSMEG_1482/MSMEI_1446 (304 aa).

S-adenosyl-L-methionine contacts are provided by residues aspartate 130 and 159-160 (DL).

The protein belongs to the UPF0677 family.

In terms of biological role, exhibits S-adenosyl-L-methionine-dependent methyltransferase activity. This chain is Putative S-adenosyl-L-methionine-dependent methyltransferase MSMEG_1482/MSMEI_1446, found in Mycolicibacterium smegmatis (strain ATCC 700084 / mc(2)155) (Mycobacterium smegmatis).